A 1416-amino-acid chain; its full sequence is DNA-directed RNA polymerase subunit beta' (1416 aa).

4 residues coordinate Zn(2+): cysteine 71, cysteine 73, cysteine 86, and cysteine 89. The Mg(2+) site is built by aspartate 461, aspartate 463, and aspartate 465. Zn(2+) is bound by residues cysteine 815, cysteine 889, cysteine 896, and cysteine 899.

This sequence belongs to the RNA polymerase beta' chain family. As to quaternary structure, the RNAP catalytic core consists of 2 alpha, 1 beta, 1 beta' and 1 omega subunit. When a sigma factor is associated with the core the holoenzyme is formed, which can initiate transcription. It depends on Mg(2+) as a cofactor. Requires Zn(2+) as cofactor.

It catalyses the reaction RNA(n) + a ribonucleoside 5'-triphosphate = RNA(n+1) + diphosphate. Functionally, DNA-dependent RNA polymerase catalyzes the transcription of DNA into RNA using the four ribonucleoside triphosphates as substrates. In Haemophilus influenzae (strain 86-028NP), this protein is DNA-directed RNA polymerase subunit beta'.